Reading from the N-terminus, the 1383-residue chain is Cell surface hyaluronidase (1383 aa).

The interval Met1–Arg76 is disordered. Over Met1 to Thr82 the chain is Cytoplasmic. Phosphoserine occurs at positions 10, 53, and 63. A helical; Signal-anchor for type II membrane protein transmembrane segment spans residues Phe83–Ile103. At Ser104–Leu1383 the chain is on the extracellular side. In terms of domain architecture, G8 spans Arg121–Arg245. The region spanning Gly255 to Ile412 is the GG-type lectin 1 domain. N-linked (GlcNAc...) asparagine glycosylation occurs at Asn292. PbH1 repeat units lie at residues His669–Phe691, Thr711–Lys733, and Gly791–Ser812. 2 N-linked (GlcNAc...) asparagine glycosylation sites follow: Asn914 and Asn1234. The region spanning Lys1208–Gly1366 is the GG-type lectin 2 domain.

The protein belongs to the CEMIP family. Requires Ca(2+) as cofactor. In terms of tissue distribution, widely expressed. Strongly expressed in endothelial cells in the subcapsular sinus of lymph nodes and in the liver sinusoid, two primary sites implicated in systemic hyaluronan turnover.

The protein localises to the cell membrane. The catalysed reaction is Random hydrolysis of (1-&gt;4)-linkages between N-acetyl-beta-D-glucosamine and D-glucuronate residues in hyaluronate.. Cell surface hyaluronidase that mediates the initial cleavage of extracellular high-molecular-weight hyaluronan into intermediate-size hyaluronan of approximately 5 kDa fragments. Very specific to hyaluronan; not able to cleave chondroitin sulfate or dermatan sulfate. Has an essential function in systemic hyaluronan catabolism and turnover and regulates cell adhesion and migration via hyaluronan degradation at focal adhesion sites. Acts as a regulator of angiogenesis and heart morphogenesis by mediating degradation of extracellular hyaluronan, thereby regulating VEGF signaling. This is Cell surface hyaluronidase from Mus musculus (Mouse).